Consider the following 327-residue polypeptide: E3 ubiquitin ligase Rnf121 (327 aa).

Helical transmembrane passes span 50-70 (MHAE…LLLV), 79-96 (SYNM…VYFT), 99-119 (LHWW…AYIT), 148-168 (ATGI…NLLF), and 173-193 (EDAM…GVLG). An RING-type; atypical zinc finger spans residues 226 to 276 (CAVCGQQIFVDVNEEGIIENTYRLSCNHVFHEFCIRGWCIVGKKQTCPYCK).

Belongs to the RNF121 family.

The protein localises to the endoplasmic reticulum membrane. It carries out the reaction S-ubiquitinyl-[E2 ubiquitin-conjugating enzyme]-L-cysteine + [acceptor protein]-L-lysine = [E2 ubiquitin-conjugating enzyme]-L-cysteine + N(6)-ubiquitinyl-[acceptor protein]-L-lysine.. It functions in the pathway protein modification; protein ubiquitination. E3 ubiquitin ligase which accepts ubiquitin and transfers it to substrates thereby promoting their degradation by the endoplasmic reticulum-associated degradation (ERAD) pathway which is a pathway involved in ubiquitin-dependent degradation of misfolded endoplasmic reticulum proteins. May regulate the unfolded protein response to reduce endoplasmic reticulum stress. This is E3 ubiquitin ligase Rnf121 (rnf121) from Xenopus laevis (African clawed frog).